The following is a 501-amino-acid chain: Phenylalanine--tRNA ligase alpha subunit (501 aa).

Thr340 and Phe423 together coordinate L-phenylalanine. Glu425 is a Mg(2+) binding site. Position 448 (Phe448) interacts with L-phenylalanine.

Belongs to the class-II aminoacyl-tRNA synthetase family. Phe-tRNA synthetase alpha subunit type 2 subfamily. Tetramer of two alpha and two beta subunits. Requires Mg(2+) as cofactor.

Its subcellular location is the cytoplasm. It catalyses the reaction tRNA(Phe) + L-phenylalanine + ATP = L-phenylalanyl-tRNA(Phe) + AMP + diphosphate + H(+). This is Phenylalanine--tRNA ligase alpha subunit from Methanococcus maripaludis (strain C5 / ATCC BAA-1333).